We begin with the raw amino-acid sequence, 67 residues long: Large ribosomal subunit protein uL29 (67 aa).

Belongs to the universal ribosomal protein uL29 family.

This chain is Large ribosomal subunit protein uL29, found in Heliobacterium modesticaldum (strain ATCC 51547 / Ice1).